Here is a 461-residue protein sequence, read N- to C-terminus: tRNA modification GTPase MnmE (461 aa).

(6S)-5-formyl-5,6,7,8-tetrahydrofolate is bound by residues Arg-22, Glu-87, and Arg-126. Residues 222–382 (GITAVIAGKP…LENKLYEILI (161 aa)) enclose the TrmE-type G domain. Position 232 (Asn-232) interacts with K(+). Residues 232–237 (NVGKSS), 251–257 (TDIPGTT), 276–279 (DTAG), and 363–365 (SAR) each bind GTP. Ser-236 is a binding site for Mg(2+). Residues Thr-251, Ile-253, and Thr-256 each coordinate K(+). Residue Thr-257 coordinates Mg(2+). A (6S)-5-formyl-5,6,7,8-tetrahydrofolate-binding site is contributed by Lys-461.

It belongs to the TRAFAC class TrmE-Era-EngA-EngB-Septin-like GTPase superfamily. TrmE GTPase family. In terms of assembly, homodimer. Heterotetramer of two MnmE and two MnmG subunits. The cofactor is K(+).

The protein resides in the cytoplasm. Exhibits a very high intrinsic GTPase hydrolysis rate. Involved in the addition of a carboxymethylaminomethyl (cmnm) group at the wobble position (U34) of certain tRNAs, forming tRNA-cmnm(5)s(2)U34. This Carboxydothermus hydrogenoformans (strain ATCC BAA-161 / DSM 6008 / Z-2901) protein is tRNA modification GTPase MnmE.